We begin with the raw amino-acid sequence, 139 residues long: Nucleoside diphosphate kinase (139 aa).

ATP is bound by residues lysine 10, phenylalanine 58, arginine 86, threonine 92, arginine 104, and asparagine 114. Histidine 117 functions as the Pros-phosphohistidine intermediate in the catalytic mechanism.

It belongs to the NDK family. As to quaternary structure, homotetramer. Mg(2+) is required as a cofactor.

The protein localises to the cytoplasm. The enzyme catalyses a 2'-deoxyribonucleoside 5'-diphosphate + ATP = a 2'-deoxyribonucleoside 5'-triphosphate + ADP. It carries out the reaction a ribonucleoside 5'-diphosphate + ATP = a ribonucleoside 5'-triphosphate + ADP. Functionally, major role in the synthesis of nucleoside triphosphates other than ATP. The ATP gamma phosphate is transferred to the NDP beta phosphate via a ping-pong mechanism, using a phosphorylated active-site intermediate. This is Nucleoside diphosphate kinase from Rhodococcus erythropolis (strain PR4 / NBRC 100887).